We begin with the raw amino-acid sequence, 490 residues long: Tryptophan decarboxylase (490 aa).

At K306 the chain carries N6-(pyridoxal phosphate)lysine.

It belongs to the group II decarboxylase family. In terms of assembly, homodimer. Pyridoxal 5'-phosphate is required as a cofactor.

Its subcellular location is the cytoplasm. The catalysed reaction is L-tryptophan + H(+) = tryptamine + CO2. With respect to regulation, inhibited by (S)-alpha-fluoromethyltryptophan. Catalyzes the decarboxylation of tryptophan to tryptamine. Tryptamine is a neurotransmitter that induces the release of serotonin, which is suggested to modulate gastrointestinal motility. Therefore, the tryptophan decarboxylase from the gut bacteria Ruminococcus gnavus (strain ATCC 29149 / VPI C7-9) may influence host brain and behavior. Has weak activity with tyrosine and phenylalanine. The chain is Tryptophan decarboxylase from Mediterraneibacter gnavus (strain ATCC 29149 / DSM 114966 / JCM 6515 / VPI C7-9) (Ruminococcus gnavus).